The primary structure comprises 550 residues: Amino acid transporter AVT1C (550 aa).

The span at 1-11 shows a compositional bias: polar residues; it reads MNHVPSDQSFY. 2 disordered regions span residues 1-44 and 128-148; these read MNHV…ENQA and QGLLSPIPSRRGSMRKDEKSS. The span at 20–34 shows a compositional bias: basic and acidic residues; sequence RKDYVEEDGGSHSDS. A run of 11 helical transmembrane segments spans residues 165–185, 190–210, 237–257, 283–303, 307–327, 342–362, 377–397, 422–442, 462–484, 488–510, and 521–541; these read AVLNGLNVLCGVGILSTPYAA, WLGLMILFVYGLLSFYTGILL, IFVSIVLYLELYACCVEYIIL, LFALLTTLAVLPTVWLRDLSV, ISAGGVIASVLVVLCLFWIGL, LSTLPVAIGLYGYCYSGHAVF, AVLLTCFGICTLMYAGVAVMG, IAVWTTVVNPFTKYALTISPV, IGIRTLLVFSTLLVGLAIPFFGL, LIGSLLTMLVTLILPPACFLSIV, and LCVLIIIVGAISSVIGSYSAL.

The protein belongs to the amino acid/polyamine transporter 2 family. Amino acid/auxin permease (AAAP) (TC 2.A.18.5) subfamily.

It is found in the membrane. The chain is Amino acid transporter AVT1C from Arabidopsis thaliana (Mouse-ear cress).